Consider the following 423-residue polypeptide: Glutamate-1-semialdehyde 2,1-aminomutase (423 aa).

K266 carries the post-translational modification N6-(pyridoxal phosphate)lysine.

Belongs to the class-III pyridoxal-phosphate-dependent aminotransferase family. HemL subfamily. As to quaternary structure, homodimer. Pyridoxal 5'-phosphate is required as a cofactor.

It is found in the cytoplasm. The enzyme catalyses (S)-4-amino-5-oxopentanoate = 5-aminolevulinate. It functions in the pathway porphyrin-containing compound metabolism; protoporphyrin-IX biosynthesis; 5-aminolevulinate from L-glutamyl-tRNA(Glu): step 2/2. This is Glutamate-1-semialdehyde 2,1-aminomutase from Desulfovibrio desulfuricans (strain ATCC 27774 / DSM 6949 / MB).